We begin with the raw amino-acid sequence, 532 residues long: Intercellular adhesion molecule 1 (532 aa).

The N-terminal stretch at 1-27 is a signal peptide; it reads MAPSSPRPALPALLVLLGALFPGPGNA. Over 28 to 480 the chain is Extracellular; the sequence is QTSVSPPKVI…TVNVLSPRYE (453 aa). Ig-like C2-type domains are found at residues 41-103 and 128-193; these read GGSV…QSTA and GKDL…LDLR. 3 disulfides stabilise this stretch: Cys-48-Cys-92, Cys-52-Cys-96, and Cys-135-Cys-186. Asn-145 is a glycosylation site (N-linked (GlcNAc...) asparagine). A Cell attachment site; atypical motif is present at residues 152–154; the sequence is RGE. Asn-183, Asn-202, Asn-267, and Asn-296 each carry an N-linked (GlcNAc...) asparagine glycan. 2 consecutive Ig-like C2-type domains span residues 230–297 and 325–378; these read DTQG…LGNQ and GTEV…LEVA. Residues Cys-237 and Cys-290 are joined by a disulfide bond. An intrachain disulfide couples Cys-332 to Cys-371. Residues Asn-385 and Asn-406 are each glycosylated (N-linked (GlcNAc...) asparagine). 3 disulfides stabilise this stretch: Cys-403-Cys-419, Cys-419-Cys-457, and Cys-431-Cys-457. The Ig-like C2-type 5 domain maps to 412–464; the sequence is NSQQTPMCQASGNPLPELKCLKDGTFPLPVGESVTVTRDLEGTYLCRARSTQG. A helical membrane pass occupies residues 481-503; it reads IVIITVVAAAVIMGTAGLSTYLY. The Cytoplasmic portion of the chain corresponds to 504 to 532; the sequence is NRQRKIRKYRLQQAQKGTPMKPNTQATPP. Residues Thr-521 and Thr-530 each carry the phosphothreonine modification.

It belongs to the immunoglobulin superfamily. ICAM family. Homodimer. Interacts with MUC1 and promotes cell aggregation in epithelial cells. Interacts with ARHGEF26/SGEF. Interacts (on T cell side) with CD81, CD247 and CD9 at immunological synapses between antigen-presenting cells and T cells. In terms of processing, monoubiquitinated, which is promoted by MARCH9 and leads to endocytosis.

The protein resides in the membrane. In terms of biological role, ICAM proteins are ligands for the leukocyte adhesion protein LFA-1 (integrin alpha-L/beta-2). During leukocyte trans-endothelial migration, ICAM1 engagement promotes the assembly of endothelial apical cups through ARHGEF26/SGEF and RHOG activation. This Pan troglodytes (Chimpanzee) protein is Intercellular adhesion molecule 1 (ICAM1).